We begin with the raw amino-acid sequence, 175 residues long: Cuticle protein CP1876 (175 aa).

Calcified shell.

The polypeptide is Cuticle protein CP1876 (Cancer pagurus (Rock crab)).